The chain runs to 257 residues: Proteasome assembly chaperone 1 (257 aa).

It belongs to the PSMG1 family. As to quaternary structure, forms a heterodimer with psmg2.

In terms of biological role, chaperone protein which promotes assembly of the 20S proteasome as part of a heterodimer with psmg2. This Nematostella vectensis (Starlet sea anemone) protein is Proteasome assembly chaperone 1 (psmg1).